The sequence spans 156 residues: MTAGGRRMSMVDVTGKKEEIRIAEASGFLRLTEDGVNAVKSGESHPQGKGDPIEVAKVAAILAVKKTPELVPHCHPIKITGVDVDVEVLEDGVKMSVRVKSEGKTGVEMDALTGLVVGLVTLWDMVKYAEKDEEGQYPHTRIENVRVVEKIIKEKE.

Position 109-110 (109-110) interacts with substrate; sequence MD. Residue Asp-124 is part of the active site.

It belongs to the MoaC family. As to quaternary structure, homohexamer; trimer of dimers.

The enzyme catalyses (8S)-3',8-cyclo-7,8-dihydroguanosine 5'-triphosphate = cyclic pyranopterin phosphate + diphosphate. It functions in the pathway cofactor biosynthesis; molybdopterin biosynthesis. In terms of biological role, catalyzes the conversion of (8S)-3',8-cyclo-7,8-dihydroguanosine 5'-triphosphate to cyclic pyranopterin monophosphate (cPMP). This Methanopyrus kandleri (strain AV19 / DSM 6324 / JCM 9639 / NBRC 100938) protein is Probable cyclic pyranopterin monophosphate synthase.